Consider the following 618-residue polypeptide: DNA mismatch repair protein MutL (618 aa).

The disordered stretch occupies residues 371–401 (AREPATPRYSGGASGGSGGRQSVGGWSHAQP). Positions 382-392 (GASGGSGGRQS) are enriched in gly residues.

It belongs to the DNA mismatch repair MutL/HexB family.

Its function is as follows. This protein is involved in the repair of mismatches in DNA. It is required for dam-dependent methyl-directed DNA mismatch repair. May act as a 'molecular matchmaker', a protein that promotes the formation of a stable complex between two or more DNA-binding proteins in an ATP-dependent manner without itself being part of a final effector complex. The sequence is that of DNA mismatch repair protein MutL from Salmonella arizonae (strain ATCC BAA-731 / CDC346-86 / RSK2980).